The primary structure comprises 903 residues: Zinc finger CCCH domain-containing protein 27 (903 aa).

The disordered stretch occupies residues 1–144; sequence MIKESSSPAL…GRNGAPWAQH (144 aa). Positions 11–24 are enriched in basic and acidic residues; that stretch reads DADKIEVPSPKDEN. Acidic residues predominate over residues 33 to 46; sequence TDNEDFEISDDDDD. A compositionally biased stretch (basic and acidic residues) spans 86 to 96; that stretch reads SHGEAQKDFFP. The C3H1-type zinc-finger motif lies at 225–253; it reads GMPRQRCRDFEERGFCLRGDMCPMEHGLN. Residues 390–456 are disordered; sequence ASKKLGHGKT…GRQSNRASHK (67 aa). A compositionally biased stretch (low complexity) spans 397-410; that stretch reads GKTANATSTSATGN. A compositionally biased stretch (polar residues) spans 432–441; it reads KDSNGQSNSR. In terms of domain architecture, RRM spans 459–531; sequence RTLYVNGIPL…RFIKLWWANR (73 aa). Disordered stretches follow at residues 545 to 609, 642 to 720, and 826 to 903; these read KSSH…DTKR, KQKG…QTSP, and TNHS…DVSQ. Positions 556-576 are enriched in polar residues; that stretch reads SVPQPSSSNRGKENLQSATPR. Residues 577–587 show a composition bias toward low complexity; that stretch reads ASSGSSAEASG. The stretch at 608-649 forms a coiled coil; the sequence is KRQESLELLEELRKKQEILAQKRDEFRRQLEKLAKQKGLANS. A compositionally biased stretch (low complexity) spans 693–708; the sequence is SGELASSSHKSSATSA. Over residues 826-886 the composition is skewed to polar residues; sequence TNHSRFQKTS…SMPTATSAKT (61 aa).

The sequence is that of Zinc finger CCCH domain-containing protein 27 from Oryza sativa subsp. japonica (Rice).